The following is a 272-amino-acid chain: Ribonuclease HII (272 aa).

Positions 87-272 (KYVAGVDEVG…HRMSFLKNIL (186 aa)) constitute an RNase H type-2 domain. Asp93, Glu94, and Asp188 together coordinate a divalent metal cation.

This sequence belongs to the RNase HII family. The cofactor is Mn(2+). Requires Mg(2+) as cofactor.

It is found in the cytoplasm. The enzyme catalyses Endonucleolytic cleavage to 5'-phosphomonoester.. Functionally, endonuclease that specifically degrades the RNA of RNA-DNA hybrids. This is Ribonuclease HII from Clostridium perfringens (strain 13 / Type A).